Consider the following 446-residue polypeptide: Probable D-serine dehydratase (446 aa).

N6-(pyridoxal phosphate)lysine is present on Lys-118.

The protein belongs to the serine/threonine dehydratase family. DsdA subfamily. It depends on pyridoxal 5'-phosphate as a cofactor.

It carries out the reaction D-serine = pyruvate + NH4(+). This is Probable D-serine dehydratase from Ectopseudomonas mendocina (strain ymp) (Pseudomonas mendocina).